The following is an 852-amino-acid chain: Lon protease homolog 2, peroxisomal (852 aa).

Ser2 carries the N-acetylserine modification. In terms of domain architecture, Lon N-terminal spans Leu13 to Ile222. Gly375–Thr382 contributes to the ATP binding site. Residues Leu651–Gly837 enclose the Lon proteolytic domain. Catalysis depends on residues Ser743 and Lys786. The short motif at Ser850–Leu852 is the Microbody targeting signal element.

Belongs to the peptidase S16 family. In terms of assembly, interacts with PEX5. Interacts with TYSND1. May interact with enzymes involved in beta-oxidation of fatty acids, including ACOX1/AOX.

Its subcellular location is the peroxisome matrix. The catalysed reaction is Hydrolysis of proteins in presence of ATP.. In terms of biological role, ATP-dependent serine protease that mediates the selective degradation of misfolded and unassembled polypeptides in the peroxisomal matrix. Necessary for type 2 peroxisome targeting signal (PTS2)-containing protein processing and facilitates peroxisome matrix protein import. May indirectly regulate peroxisomal fatty acid beta-oxidation through degradation of the self-processed forms of TYSND1. In Bos taurus (Bovine), this protein is Lon protease homolog 2, peroxisomal.